The sequence spans 944 residues: Trehalose monomycolate exporter MmpL3 (944 aa).

The Cytoplasmic segment spans residues Met1–Arg13. Residues Phe14–Leu34 form a helical membrane-spanning segment. Over Gly35–Glu185 the chain is Periplasmic. A 1,2-diacylglycero-3-phosphoethanolamine is bound at residue Gln40–Tyr44. The helical transmembrane segment at Val186–Ala206 threads the bilayer. Residues Gly207–Pro209 are Cytoplasmic-facing. The helical transmembrane segment at Val210–Phe230 threads the bilayer. Residues Gly231 to Tyr235 lie on the Periplasmic side of the membrane. Residues Phe236–Ile256 form a helical membrane-spanning segment. Topologically, residues Val257–Thr286 are cytoplasmic. Residues Phe287–Leu307 form a helical membrane-spanning segment. Topologically, residues Lys308–Thr314 are periplasmic. The helical transmembrane segment at Ile315 to Ile335 threads the bilayer. The Cytoplasmic portion of the chain corresponds to Leu336–Pro396. A helical membrane pass occupies residues Val397–Leu417. The Periplasmic segment spans residues Ser418–Met562. The chain crosses the membrane as a helical span at residues Val563–Leu583. Topologically, residues Pro584 to Lys586 are cytoplasmic. Residues Ala587–Val607 traverse the membrane as a helical segment. Residues Asp608 to Asn616 are Periplasmic-facing. A helical transmembrane segment spans residues Phe617–Leu637. Topologically, residues Ser638–Arg672 are cytoplasmic. Residues Ile673–Leu693 form a helical membrane-spanning segment. Residues Val694–Tyr698 lie on the Periplasmic side of the membrane. The helical transmembrane segment at Leu699 to Val719 threads the bilayer. Over Pro720 to Leu944 the chain is Cytoplasmic. The disordered stretch occupies residues Ala778–Leu944. The span at Pro791 to Thr828 shows a compositional bias: low complexity. Residues Arg829–Pro839 are compositionally biased toward polar residues. Positions Ser855–Ala866 are enriched in pro residues.

This sequence belongs to the resistance-nodulation-cell division (RND) (TC 2.A.6) family. MmpL subfamily. As to quaternary structure, monomer. Interacts with TtfA (via N-terminus); active trehalose monomycolate (TMM) biosynthesis is not required for the complex formation.

It is found in the cell inner membrane. It localises to the cell septum. The protein localises to the cell tip. In terms of biological role, transports trehalose monomycolate (TMM) to the cell wall. Flips TMM across the inner membrane. Membrane potential is not required for this function. Transports probably phosphatidylethanolamine (PE) as well. Binds specifically both TMM and PE, but not trehalose dimycolate (TDM). Also binds diacylglycerol (DAG) and other phospholipids, including phosphatidylglycerol (PG), phosphatidylinositol (PI), and cardiolipin (CDL). Contributes to membrane potential, cell wall composition, antibiotic susceptibility and fitness. Could also be part of a heme-iron acquisition system. The sequence is that of Trehalose monomycolate exporter MmpL3 (mmpL3) from Mycobacterium tuberculosis (strain CDC 1551 / Oshkosh).